Here is a 238-residue protein sequence, read N- to C-terminus: Synapse differentiation-inducing gene protein 1-like (238 aa).

Disordered stretches follow at residues Met-1 to Pro-24, Lys-78 to Ala-111, and Glu-126 to Thr-155. Residues Met-1 to Leu-162 are Extracellular-facing. A compositionally biased stretch (acidic residues) spans Gly-133 to Asp-151. Residues Gly-163 to Phe-183 traverse the membrane as a helical segment. At Ser-184 to Arg-205 the chain is on the cytoplasmic side. The chain crosses the membrane as a helical span at residues Ala-206 to Val-226. At Ala-227–Ser-238 the chain is on the extracellular side.

The protein belongs to the CD225/Dispanin family.

It localises to the membrane. The protein localises to the golgi apparatus. Its subcellular location is the cis-Golgi network. The polypeptide is Synapse differentiation-inducing gene protein 1-like (SYNDIG1L) (Bos taurus (Bovine)).